Consider the following 420-residue polypeptide: UDP-N-acetylmuramoylalanine--D-glutamate ligase (420 aa).

109 to 115 (GSVGKST) contributes to the ATP binding site.

Belongs to the MurCDEF family.

It is found in the cytoplasm. It carries out the reaction UDP-N-acetyl-alpha-D-muramoyl-L-alanine + D-glutamate + ATP = UDP-N-acetyl-alpha-D-muramoyl-L-alanyl-D-glutamate + ADP + phosphate + H(+). It participates in cell wall biogenesis; peptidoglycan biosynthesis. Functionally, cell wall formation. Catalyzes the addition of glutamate to the nucleotide precursor UDP-N-acetylmuramoyl-L-alanine (UMA). This is UDP-N-acetylmuramoylalanine--D-glutamate ligase from Fervidobacterium nodosum (strain ATCC 35602 / DSM 5306 / Rt17-B1).